The following is a 510-amino-acid chain: Light-independent protochlorophyllide reductase subunit B (510 aa).

D36 lines the [4Fe-4S] cluster pocket. D296 (proton donor) is an active-site residue. Residue 431-432 coordinates substrate; that stretch reads GM.

The protein belongs to the ChlB/BchB/BchZ family. As to quaternary structure, protochlorophyllide reductase is composed of three subunits; ChlL, ChlN and ChlB. Forms a heterotetramer of two ChlB and two ChlN subunits. It depends on [4Fe-4S] cluster as a cofactor.

The enzyme catalyses chlorophyllide a + oxidized 2[4Fe-4S]-[ferredoxin] + 2 ADP + 2 phosphate = protochlorophyllide a + reduced 2[4Fe-4S]-[ferredoxin] + 2 ATP + 2 H2O. Its pathway is porphyrin-containing compound metabolism; chlorophyll biosynthesis (light-independent). Its function is as follows. Component of the dark-operative protochlorophyllide reductase (DPOR) that uses Mg-ATP and reduced ferredoxin to reduce ring D of protochlorophyllide (Pchlide) to form chlorophyllide a (Chlide). This reaction is light-independent. The NB-protein (ChlN-ChlB) is the catalytic component of the complex. This is Light-independent protochlorophyllide reductase subunit B from Synechococcus sp. (strain JA-2-3B'a(2-13)) (Cyanobacteria bacterium Yellowstone B-Prime).